The chain runs to 469 residues: Pentatricopeptide repeat-containing protein At2g34370, mitochondrial (469 aa).

A mitochondrion-targeting transit peptide spans 1 to 65 (MVRLVCSRIL…QNRSFVQCRR (65 aa)). 4 PPR repeats span residues 142–172 (DARSYHTVIEMYSGCRSTDDALNVFNEMPKR), 173–207 (NSETWGTMIRCLAKNGEGERAIDMFTRFIEEGNKP), 208–238 (DKEIFKAVFFACVSIGDINEGLLHFESMYRD), and 244–274 (SMEDYVNVIEMLAACGHLDEALDFVERMTVE). A type DYW motif region spans residues 375–469 (DIGFVPATRV…NGVCSCKDYW (95 aa)).

It belongs to the PPR family. PCMP-H subfamily.

It is found in the mitochondrion. This is Pentatricopeptide repeat-containing protein At2g34370, mitochondrial (PCMP-H25) from Arabidopsis thaliana (Mouse-ear cress).